We begin with the raw amino-acid sequence, 485 residues long: Proline betaine:corrinoid methyltransferase (485 aa).

It belongs to the trimethylamine methyltransferase family. The proline betaine:THF methyl transfer system is composed of two methyltransferases, MtpB and MtqA, and the corrinoid protein MtqC.

The enzyme catalyses Co(I)-[quaternary-amine-specific corrinoid protein] + L-proline betaine + H(+) = methyl-Co(III)-[quaternary-amine-specific corrinoid protein] + N-methyl-L-proline. Its function is as follows. Involved in the degradation of the quaternary amine L-proline betaine. Component of a corrinoid-dependent methyltransferase system that transfers a methyl group from L-proline betaine to tetrahydrofolate (THF), forming methyl-THF, a key intermediate in the Wood-Ljungdahl acetogenesis pathway. MtpB catalyzes the methylation of the corrinoid protein MtqC, using L-proline betaine as the methyl donor. Shows weak activity with some other quaternary amines, including carnitine, phosphocholine, glycine betaine or betonicine, but cannot methylate free cob(I)alamin. This chain is Proline betaine:corrinoid methyltransferase, found in Eubacterium limosum.